A 1374-amino-acid chain; its full sequence is DNA-directed RNA polymerase subunit beta (1374 aa).

The protein belongs to the RNA polymerase beta chain family. As to quaternary structure, the RNAP catalytic core consists of 2 alpha, 1 beta, 1 beta' and 1 omega subunit. When a sigma factor is associated with the core the holoenzyme is formed, which can initiate transcription.

It catalyses the reaction RNA(n) + a ribonucleoside 5'-triphosphate = RNA(n+1) + diphosphate. Its function is as follows. DNA-dependent RNA polymerase catalyzes the transcription of DNA into RNA using the four ribonucleoside triphosphates as substrates. In Rickettsia typhi (strain ATCC VR-144 / Wilmington), this protein is DNA-directed RNA polymerase subunit beta.